Here is a 275-residue protein sequence, read N- to C-terminus: 2,3,4,5-tetrahydropyridine-2,6-dicarboxylate N-succinyltransferase (275 aa).

Residues arginine 108 and aspartate 145 each coordinate substrate.

It belongs to the transferase hexapeptide repeat family. Homotrimer.

Its subcellular location is the cytoplasm. It carries out the reaction (S)-2,3,4,5-tetrahydrodipicolinate + succinyl-CoA + H2O = (S)-2-succinylamino-6-oxoheptanedioate + CoA. The protein operates within amino-acid biosynthesis; L-lysine biosynthesis via DAP pathway; LL-2,6-diaminopimelate from (S)-tetrahydrodipicolinate (succinylase route): step 1/3. This is 2,3,4,5-tetrahydropyridine-2,6-dicarboxylate N-succinyltransferase from Jannaschia sp. (strain CCS1).